Here is a 372-residue protein sequence, read N- to C-terminus: Peroxisomal biogenesis factor 3 (372 aa).

At 1–15 the chain is on the cytoplasmic side; that stretch reads MLRSMWNFLKRHKKK. A targeting to peroxisomes region spans residues 1-45; the sequence is MLRSMWNFLKRHKKKCIFLGTVLGGVYILGKYGQKKIREIQEREA. A helical membrane pass occupies residues 16-36; it reads CIFLGTVLGGVYILGKYGQKK. Over 37-116 the chain is Peroxisomal; the sequence is IREIQEREAA…LKIISFTRSI (80 aa). Residues 117–140 form a helical membrane-spanning segment; that stretch reads VAVYSTCMLVVLLRVQLNIIGGYI. Residues 120–136 form an interaction with PEX19 region; sequence YSTCMLVVLLRVQLNII. Residues 141–372 lie on the Cytoplasmic side of the membrane; the sequence is YLDNATVGKN…AFSTPQQLEK (232 aa).

It belongs to the peroxin-3 family. In terms of assembly, interacts with PEX19. Identified in all tissues analyzed, with the strongest expression in liver and in testis.

The protein resides in the peroxisome membrane. Involved in peroxisome biosynthesis and integrity. Assembles membrane vesicles before the matrix proteins are translocated. As a docking factor for PEX19, is necessary for the import of peroxisomal membrane proteins in the peroxisomes. The chain is Peroxisomal biogenesis factor 3 (Pex3) from Mus musculus (Mouse).